The primary structure comprises 370 residues: 4-hydroxy-3-methylbut-2-en-1-yl diphosphate synthase (flavodoxin) (370 aa).

Residues Cys270, Cys273, Cys305, and Glu312 each contribute to the [4Fe-4S] cluster site.

The protein belongs to the IspG family. It depends on [4Fe-4S] cluster as a cofactor.

The catalysed reaction is (2E)-4-hydroxy-3-methylbut-2-enyl diphosphate + oxidized [flavodoxin] + H2O + 2 H(+) = 2-C-methyl-D-erythritol 2,4-cyclic diphosphate + reduced [flavodoxin]. The protein operates within isoprenoid biosynthesis; isopentenyl diphosphate biosynthesis via DXP pathway; isopentenyl diphosphate from 1-deoxy-D-xylulose 5-phosphate: step 5/6. Functionally, converts 2C-methyl-D-erythritol 2,4-cyclodiphosphate (ME-2,4cPP) into 1-hydroxy-2-methyl-2-(E)-butenyl 4-diphosphate. The sequence is that of 4-hydroxy-3-methylbut-2-en-1-yl diphosphate synthase (flavodoxin) from Marinomonas sp. (strain MWYL1).